Consider the following 368-residue polypeptide: Chaperone protein DnaJ (368 aa).

The 66-residue stretch at 5 to 70 (DYYEVLGVSK…EKRSMYDRMG (66 aa)) folds into the J domain. The CR-type zinc finger occupies 132–210 (GVKKTITFTA…CHGSGVADRQ (79 aa)). Zn(2+) is bound by residues cysteine 145, cysteine 148, cysteine 162, cysteine 165, cysteine 184, cysteine 187, cysteine 198, and cysteine 201. CXXCXGXG motif repeat units follow at residues 145-152 (CEVCDGKG), 162-169 (CRTCHGTG), 184-191 (CGTCRGQG), and 198-205 (CQSCHGSG). Positions 349–368 (DGDEHSSSPKKKSFFDRLFD) are disordered. Basic and acidic residues predominate over residues 350–368 (GDEHSSSPKKKSFFDRLFD).

It belongs to the DnaJ family. Homodimer. It depends on Zn(2+) as a cofactor.

The protein resides in the cytoplasm. Participates actively in the response to hyperosmotic and heat shock by preventing the aggregation of stress-denatured proteins and by disaggregating proteins, also in an autonomous, DnaK-independent fashion. Unfolded proteins bind initially to DnaJ; upon interaction with the DnaJ-bound protein, DnaK hydrolyzes its bound ATP, resulting in the formation of a stable complex. GrpE releases ADP from DnaK; ATP binding to DnaK triggers the release of the substrate protein, thus completing the reaction cycle. Several rounds of ATP-dependent interactions between DnaJ, DnaK and GrpE are required for fully efficient folding. Also involved, together with DnaK and GrpE, in the DNA replication of plasmids through activation of initiation proteins. This is Chaperone protein DnaJ from Acinetobacter baylyi (strain ATCC 33305 / BD413 / ADP1).